The sequence spans 500 residues: Probable cytosol aminopeptidase (500 aa).

Lys264 and Asp269 together coordinate Mn(2+). Lys276 is an active-site residue. Mn(2+)-binding residues include Asp287, Asp346, and Glu348. Arg350 is a catalytic residue.

Belongs to the peptidase M17 family. Mn(2+) is required as a cofactor.

It is found in the cytoplasm. It catalyses the reaction Release of an N-terminal amino acid, Xaa-|-Yaa-, in which Xaa is preferably Leu, but may be other amino acids including Pro although not Arg or Lys, and Yaa may be Pro. Amino acid amides and methyl esters are also readily hydrolyzed, but rates on arylamides are exceedingly low.. The enzyme catalyses Release of an N-terminal amino acid, preferentially leucine, but not glutamic or aspartic acids.. Its function is as follows. Presumably involved in the processing and regular turnover of intracellular proteins. Catalyzes the removal of unsubstituted N-terminal amino acids from various peptides. The chain is Probable cytosol aminopeptidase from Rhodopseudomonas palustris (strain ATCC BAA-98 / CGA009).